A 437-amino-acid chain; its full sequence is Probable carboxypeptidase HCBG_00059 (437 aa).

The signal sequence occupies residues 1–20 (MKLSNLAALLSASTVAPVAA). N-linked (GlcNAc...) asparagine glycosylation occurs at Asn-153. Residue Asp-163 coordinates Zn(2+). The active-site Proton acceptor is the Glu-195. A Zn(2+)-binding site is contributed by Glu-196. A glycan (N-linked (GlcNAc...) asparagine) is linked at Asn-346.

This sequence belongs to the peptidase M20A family. The cofactor is Zn(2+).

The protein localises to the secreted. The sequence is that of Probable carboxypeptidase HCBG_00059 from Ajellomyces capsulatus (strain G186AR / H82 / ATCC MYA-2454 / RMSCC 2432) (Darling's disease fungus).